A 52-amino-acid polypeptide reads, in one-letter code: Eukaryotic translation initiation factor 5A (52 aa).

K42 carries the post-translational modification Hypusine.

This sequence belongs to the eIF-5A family. Lys-42 undergoes hypusination, a unique post-translational modification that consists in the addition of a butylamino group from spermidine to lysine side chain, leading to the formation of the unusual amino acid hypusine. eIF-5As are the only known proteins to undergo this modification, which is essential for their function.

It is found in the cytoplasm. Functionally, translation factor that promotes translation elongation and termination, particularly upon ribosome stalling at specific amino acid sequence contexts. Binds between the exit (E) and peptidyl (P) site of the ribosome and promotes rescue of stalled ribosome: specifically required for efficient translation of polyproline-containing peptides as well as other motifs that stall the ribosome. Acts as a ribosome quality control (RQC) cofactor by joining the RQC complex to facilitate peptidyl transfer during CAT tailing step. This Schistosoma mansoni (Blood fluke) protein is Eukaryotic translation initiation factor 5A.